A 470-amino-acid chain; its full sequence is Neuraminidase (470 aa).

At 1–14 (MNPNQKIITIGSAS) the chain is on the intravirion side. The segment at 11 to 32 (GSASLGILILNVILHVVSIIVT) is involved in apical transport and lipid raft association. Residues 15–35 (LGILILNVILHVVSIIVTVLV) traverse the membrane as a helical segment. The segment at 32–86 (TVLVLNNNGTGLNCNGTIIREYNETVRVERVIQWYNTNTIEYIERPSNEYYMNNT) is hypervariable stalk region. Topologically, residues 36-470 (LNNNGTGLNC…AILPFDIDKM (435 aa)) are virion surface. Asn-39, Asn-46, Asn-54, and Asn-84 each carry an N-linked (GlcNAc...) asparagine; by host glycan. The segment at 89 to 470 (LCEAQGFAPF…AILPFDIDKM (382 aa)) is head of neuraminidase. 8 disulfides stabilise this stretch: Cys-90-Cys-417, Cys-122-Cys-127, Cys-182-Cys-229, Cys-231-Cys-236, Cys-277-Cys-290, Cys-279-Cys-288, Cys-316-Cys-335, and Cys-421-Cys-446. Residue Arg-116 participates in substrate binding. Asn-144 is a glycosylation site (N-linked (GlcNAc...) asparagine; by host). Asp-149 (proton donor/acceptor) is an active-site residue. Arg-150 lines the substrate pocket. 275 to 276 (EE) contacts substrate. Arg-291 serves as a coordination point for substrate. Asp-292 lines the Ca(2+) pocket. A glycan (N-linked (GlcNAc...) asparagine; by host) is linked at Asn-293. Residues Gly-296 and Asp-322 each coordinate Ca(2+). A substrate-binding site is contributed by Arg-368. N-linked (GlcNAc...) asparagine; by host glycosylation is present at Asn-398. Residue Tyr-402 is the Nucleophile of the active site.

Belongs to the glycosyl hydrolase 34 family. In terms of assembly, homotetramer. The cofactor is Ca(2+). N-glycosylated.

The protein localises to the virion membrane. Its subcellular location is the host apical cell membrane. It catalyses the reaction Hydrolysis of alpha-(2-&gt;3)-, alpha-(2-&gt;6)-, alpha-(2-&gt;8)- glycosidic linkages of terminal sialic acid residues in oligosaccharides, glycoproteins, glycolipids, colominic acid and synthetic substrates.. With respect to regulation, inhibited by the neuraminidase inhibitors zanamivir (Relenza) and oseltamivir (Tamiflu). These drugs interfere with the release of progeny virus from infected cells and are effective against all influenza strains. Resistance to neuraminidase inhibitors is quite rare. Functionally, catalyzes the removal of terminal sialic acid residues from viral and cellular glycoconjugates. Cleaves off the terminal sialic acids on the glycosylated HA during virus budding to facilitate virus release. Additionally helps virus spread through the circulation by further removing sialic acids from the cell surface. These cleavages prevent self-aggregation and ensure the efficient spread of the progeny virus from cell to cell. Otherwise, infection would be limited to one round of replication. Described as a receptor-destroying enzyme because it cleaves a terminal sialic acid from the cellular receptors. May facilitate viral invasion of the upper airways by cleaving the sialic acid moieties on the mucin of the airway epithelial cells. Likely to plays a role in the budding process through its association with lipid rafts during intracellular transport. May additionally display a raft-association independent effect on budding. Plays a role in the determination of host range restriction on replication and virulence. Sialidase activity in late endosome/lysosome traffic seems to enhance virus replication. The polypeptide is Neuraminidase (Influenza A virus (strain A/Equine/Santiago/1/1985 H3N8)).